The sequence spans 118 residues: ATP-dependent Clp protease adapter protein ClpS (118 aa).

Positions 1–24 are disordered; it reads MNGSSNSGSPGGGQTGDDDGTGFD.

It belongs to the ClpS family. In terms of assembly, binds to the N-terminal domain of the chaperone ClpA.

Involved in the modulation of the specificity of the ClpAP-mediated ATP-dependent protein degradation. The protein is ATP-dependent Clp protease adapter protein ClpS of Hyphomonas neptunium (strain ATCC 15444).